The chain runs to 604 residues: MSHPSWLPPKSTNEPVGHVTARMETTHAFGTPSISVSTQQTPKKFAPVVAPKPKYNPYKQPGGDGDFLPPPPPPVDDLGNITSQGAFPPPPPLDDVAFNVQVNPGGKTLEERRSSLDAEIDSLTSILADLESSSPYKPRIQQGSGTSSSAATTPSVSTPVTGHKRMIIPNQPPLTATKKSTAKGPGQPAPIPVTPIGTLKPQPVPASYTTASTPSRPTFNVQVRTAQPSPHYQPPGPQPTHYGSLGPGQPYAAPPARPPGAQQYGSPQPRGPDYGYAPPPARPSEPSYGYAPQQGRYQDPYYGGYGGRNGSEAPYMPQSTWKVEPAYPSSNTVGQAPPGMYQHPGPKKTYITDPVLAPQPLQQKSGYPSSGPTSSTPAFRPEDELEHLTKKMLYDMENPPSDDYFGRCARCGENVVGEGTGCTAMDQVFHVECFTCMMCNNKLRGQPFYAVEKKAYCEPCYINTLEQCSVCAKPIMERILRATGKAYHPHCFTCVMCHRSLDGIPFTVDAGGNIHCIEDFHKKFAPRCSVCKEPIMPAPGQEETVRIVALDRDFHVQCYRCEDCGGLLSEGDNQGCYPLDGHILCKTCNSARIQALTAKASTDL.

Disordered stretches follow at residues 31–96 and 129–381; these read TPSI…LDDV and DLES…AFRP. Polar residues predominate over residues 32 to 41; it reads PSISVSTQQT. 2 stretches are compositionally biased toward low complexity: residues 42 to 53 and 143 to 161; these read PKKFAPVVAPKP and GSGT…TPVT. A compositionally biased stretch (polar residues) spans 207-226; the sequence is SYTTASTPSRPTFNVQVRTA. Positions 365-377 are enriched in low complexity; the sequence is SGYPSSGPTSSTP. 3 consecutive LIM zinc-binding domains span residues 406-465, 466-526, and 527-595; these read GRCA…INTL, EQCS…KFAP, and RCSV…RIQA.

This sequence belongs to the zyxin/ajuba family.

The protein resides in the nucleus. It is found in the cytoplasm. It localises to the cell junction. Its function is as follows. May play a structural role at sites of cell adhesion in maintaining cell shape and motility. May be involved in signal transduction from cell adhesion sites to the nucleus. In Gallus gallus (Chicken), this protein is Lipoma-preferred partner homolog (LPP).